We begin with the raw amino-acid sequence, 607 residues long: Guanine nucleotide-binding protein-like 1 (607 aa).

Residues 1 to 14 (MPRKKPFSVKQKKK) show a composition bias toward basic residues. Positions 1 to 81 (MPRKKPFSVK…GPRGYDPNRY (81 aa)) are disordered. Residues 15 to 26 (QLQDKRERKRGL) show a composition bias toward basic and acidic residues. Phosphoserine occurs at positions 32, 33, and 34. Phosphothreonine is present on residues T48 and T50. S51 and S68 each carry phosphoserine. Residues 178–418 (WRQLWRVLEM…LCDCPGLIFP (241 aa)) enclose the CP-type G domain. 225-228 (NKVD) contributes to the GTP binding site. A Phosphoserine modification is found at S324. Residues 367–374 (GFPNVGKS) and 411–415 (DCPGL) each bind GTP. The disordered stretch occupies residues 544-607 (GRVGPAGDEE…PYALLGEDEC (64 aa)). A compositionally biased stretch (acidic residues) spans 550-585 (GDEEEEEEEELSSSCEEEGEEDRDADEEGEGDEDTP). 3 positions are modified to phosphoserine: S561, S562, and S563.

Belongs to the TRAFAC class YlqF/YawG GTPase family.

Possible regulatory or functional link with the histocompatibility cluster. This is Guanine nucleotide-binding protein-like 1 (Gnl1) from Mus musculus (Mouse).